The primary structure comprises 156 residues: Probable succinate transporter subunit YjjB (156 aa).

The next 4 helical transmembrane spans lie at 7–27, 54–74, 86–106, and 128–148; these read WALL…AMVF, FGMD…MIGI, VFTV…TAMI, and FLKA…PGLW.

This sequence belongs to the ThrE exporter (TC 2.A.79) family. In terms of assembly, the transporter is composed of YjjB and YjjP.

The protein resides in the cell inner membrane. Its function is as follows. Involved in succinate export with YjjP. Both proteins are required for export. The chain is Probable succinate transporter subunit YjjB from Yersinia enterocolitica serotype O:8 / biotype 1B (strain NCTC 13174 / 8081).